A 492-amino-acid chain; its full sequence is Catalase isozyme 2 (492 aa).

Residues H65 and N138 contribute to the active site. A heme-binding site is contributed by Y348.

Belongs to the catalase family. In terms of assembly, homotetramer. Heme is required as a cofactor.

Its subcellular location is the peroxisome. The protein resides in the glyoxysome. The catalysed reaction is 2 H2O2 = O2 + 2 H2O. In terms of biological role, occurs in almost all aerobically respiring organisms and serves to protect cells from the toxic effects of hydrogen peroxide. This is Catalase isozyme 2 (CAT2) from Solanum tuberosum (Potato).